Here is a 245-residue protein sequence, read N- to C-terminus: Syntaxin-61 (245 aa).

The Cytoplasmic portion of the chain corresponds to 1–224 (MSSAQDPFYI…VMKKAGAKGQ (224 aa)). One can recognise a t-SNARE coiled-coil homology domain in the interval 153–215 (MLLIKQQDEE…EFVQKKVGMV (63 aa)). The chain crosses the membrane as a helical; Anchor for type IV membrane protein span at residues 225-245 (MMMICFLLVLFIILFVLVFLT).

It belongs to the syntaxin family. In terms of assembly, interacts with VTI12 and either SYP41, SYP42 or SYP51 in the trans-Golgi network or with VTI11 and SYP51 in the prevacuolar compartment to form t-SNARE complexes. Core constituent of the SNARE complex required for membrane fusion at the trans-Golgi network. Also observed in the SYP121-complex and cellulose synthases. Colocalizes with PIP2-7 and SYP121 in trafficking vesicles and at the plasma membrane. Interacts with SYP121 and PIP2-7. Expressed in root, leaf, stem, flower and silique, but not in hypocotyl or young leaf. Strong expression in the vasculature and in guard cells of the leaf epidermis.

The protein localises to the golgi apparatus. It is found in the trans-Golgi network membrane. Its subcellular location is the prevacuolar compartment membrane. Functionally, vesicle trafficking protein that functions in the secretory pathway; the fusion of phospholipid vesicles containing SYP61 and VTI12 is triggered by YKT61 and YKT62. Together with VTI12, required for membrane fusion. Involved in osmotic stress tolerance and in abscisic acid (ABA) regulation of stomatal responses. Plays a role in the exocytic trafficking of cellulose synthases (CESAs) and the transport of cell wall components to the plasma membrane. Together with SYP121, regulates the post-Golgi trafficking of the aquaporin PIP2-7 to the plasma membrane, thus modulating cell membrane water permeability. The polypeptide is Syntaxin-61 (Arabidopsis thaliana (Mouse-ear cress)).